The primary structure comprises 354 residues: Ferrochelatase (354 aa).

Fe cation is bound by residues histidine 204 and glutamate 306.

Belongs to the ferrochelatase family.

Its subcellular location is the cytoplasm. It catalyses the reaction heme b + 2 H(+) = protoporphyrin IX + Fe(2+). The protein operates within porphyrin-containing compound metabolism; protoheme biosynthesis; protoheme from protoporphyrin-IX: step 1/1. Catalyzes the ferrous insertion into protoporphyrin IX. The sequence is that of Ferrochelatase from Coxiella burnetii (strain CbuK_Q154) (Coxiella burnetii (strain Q154)).